Consider the following 474-residue polypeptide: Adenosylhomocysteinase (474 aa).

Positions 61, 136, and 196 each coordinate substrate. 197–199 (TTT) lines the NAD(+) pocket. Positions 226 and 230 each coordinate substrate. NAD(+)-binding positions include Asn-231, 260-265 (GYGDVG), Glu-283, Asn-318, 339-341 (IGH), and Asn-384.

This sequence belongs to the adenosylhomocysteinase family. NAD(+) serves as cofactor.

It is found in the cytoplasm. The catalysed reaction is S-adenosyl-L-homocysteine + H2O = L-homocysteine + adenosine. The protein operates within amino-acid biosynthesis; L-homocysteine biosynthesis; L-homocysteine from S-adenosyl-L-homocysteine: step 1/1. In terms of biological role, may play a key role in the regulation of the intracellular concentration of adenosylhomocysteine. The protein is Adenosylhomocysteinase of Ralstonia pickettii (strain 12J).